Reading from the N-terminus, the 95-residue chain is Small ribosomal subunit protein bS6 (95 aa).

Belongs to the bacterial ribosomal protein bS6 family.

Binds together with bS18 to 16S ribosomal RNA. This Rhodococcus jostii (strain RHA1) protein is Small ribosomal subunit protein bS6.